The following is a 241-amino-acid chain: Proteasome subunit alpha (241 aa).

It belongs to the peptidase T1A family. In terms of assembly, the 20S proteasome core is composed of 14 alpha and 14 beta subunits that assemble into four stacked heptameric rings, resulting in a barrel-shaped structure. The two inner rings, each composed of seven catalytic beta subunits, are sandwiched by two outer rings, each composed of seven alpha subunits. The catalytic chamber with the active sites is on the inside of the barrel. Has a gated structure, the ends of the cylinder being occluded by the N-termini of the alpha-subunits. Is capped at one or both ends by the proteasome regulatory ATPase, PAN.

The protein localises to the cytoplasm. Its activity is regulated as follows. The formation of the proteasomal ATPase PAN-20S proteasome complex, via the docking of the C-termini of PAN into the intersubunit pockets in the alpha-rings, triggers opening of the gate for substrate entry. Interconversion between the open-gate and close-gate conformations leads to a dynamic regulation of the 20S proteasome proteolysis activity. In terms of biological role, component of the proteasome core, a large protease complex with broad specificity involved in protein degradation. The protein is Proteasome subunit alpha of Saccharolobus islandicus (strain M.16.4 / Kamchatka #3) (Sulfolobus islandicus).